Reading from the N-terminus, the 265-residue chain is uncharacterized protein (265 aa).

This sequence belongs to the ycf23 family.

The protein localises to the plastid. Its subcellular location is the chloroplast. This is an uncharacterized protein from Porphyra purpurea (Red seaweed).